The following is a 484-amino-acid chain: ATP synthase subunit beta (484 aa).

168-175 (GGAGVGKT) contacts ATP.

Belongs to the ATPase alpha/beta chains family. F-type ATPases have 2 components, CF(1) - the catalytic core - and CF(0) - the membrane proton channel. CF(1) has five subunits: alpha(3), beta(3), gamma(1), delta(1), epsilon(1). CF(0) has three main subunits: a(1), b(2) and c(9-12). The alpha and beta chains form an alternating ring which encloses part of the gamma chain. CF(1) is attached to CF(0) by a central stalk formed by the gamma and epsilon chains, while a peripheral stalk is formed by the delta and b chains.

Its subcellular location is the cell membrane. It carries out the reaction ATP + H2O + 4 H(+)(in) = ADP + phosphate + 5 H(+)(out). Its function is as follows. Produces ATP from ADP in the presence of a proton gradient across the membrane. The catalytic sites are hosted primarily by the beta subunits. This Renibacterium salmoninarum (strain ATCC 33209 / DSM 20767 / JCM 11484 / NBRC 15589 / NCIMB 2235) protein is ATP synthase subunit beta.